Reading from the N-terminus, the 760-residue chain is Xaa-Pro dipeptidyl-peptidase (760 aa).

Active-site charge relay system residues include S349, D469, and H499.

This sequence belongs to the peptidase S15 family. Homodimer.

It localises to the cytoplasm. The enzyme catalyses Hydrolyzes Xaa-Pro-|- bonds to release unblocked, N-terminal dipeptides from substrates including Ala-Pro-|-p-nitroanilide and (sequentially) Tyr-Pro-|-Phe-Pro-|-Gly-Pro-|-Ile.. Its function is as follows. Removes N-terminal dipeptides sequentially from polypeptides having unsubstituted N-termini provided that the penultimate residue is proline. This Streptococcus pyogenes serotype M1 protein is Xaa-Pro dipeptidyl-peptidase.